We begin with the raw amino-acid sequence, 208 residues long: uncharacterized protein (208 aa).

This is an uncharacterized protein from Ureaplasma parvum serovar 3 (strain ATCC 700970).